A 601-amino-acid polypeptide reads, in one-letter code: RNA-binding protein MEX3B (601 aa).

2 disordered regions span residues 1–39 (MPSS…DDQR) and 90–109 (GRQG…ISPT). S4 carries the post-translational modification Phosphoserine. The segment covering 13 to 33 (GSGGGGGGGGGGGGGGSGGGE) has biased composition (gly residues). KH domains lie at 98–159 (DGDR…RREI) and 192–253 (QTTI…REEI). 2 disordered regions span residues 284 to 332 (LHHG…TDSY) and 344 to 448 (TSRL…GGAS). Position 320 is a phosphoserine (S320). Composition is skewed to low complexity over residues 320 to 331 (SSSSLGSASTDS) and 362 to 371 (NGNNNNNGNG). Pro residues predominate over residues 395–404 (DPAPAPPPGT). Positions 420 to 442 (AAPVSSSCSSSASSSASSSSVVF) are enriched in low complexity. Phosphoserine is present on S494. The tract at residues 514–546 (LPGLPSSDTSGSSSSSSSSSSSSSSSSGLRRKG) is disordered. Low complexity predominate over residues 519-540 (SSDTSGSSSSSSSSSSSSSSSS). The RING-type zinc finger occupies 550-590 (CSVCFESEVIAALVPCGHNLFCMECANRICEKSEPECPVCH).

Phosphorylation at Ser-494 creates a docking site for 14-3-3, which stabilizes the protein and modulates its ability to bind RNA.

The protein resides in the cytoplasm. It is found in the nucleus. Its subcellular location is the P-body. The protein localises to the cytoplasmic granule. Its function is as follows. RNA-binding protein. May be involved in post-transcriptional regulatory mechanisms. This chain is RNA-binding protein MEX3B (Mex3b), found in Mus musculus (Mouse).